Here is a 244-residue protein sequence, read N- to C-terminus: 5-oxoprolinase subunit A (244 aa).

The protein belongs to the LamB/PxpA family. As to quaternary structure, forms a complex composed of PxpA, PxpB and PxpC.

The catalysed reaction is 5-oxo-L-proline + ATP + 2 H2O = L-glutamate + ADP + phosphate + H(+). In terms of biological role, catalyzes the cleavage of 5-oxoproline to form L-glutamate coupled to the hydrolysis of ATP to ADP and inorganic phosphate. In Salmonella dublin (strain CT_02021853), this protein is 5-oxoprolinase subunit A.